The sequence spans 202 residues: Small ribosomal subunit protein uS4 (202 aa).

Residues 17 to 42 (ELPGLSRKTPRRAYPPGQHGQARKKR) are disordered. Positions 90 to 152 (MRLDNTIFRL…DASRKLIETH (63 aa)) constitute an S4 RNA-binding domain.

The protein belongs to the universal ribosomal protein uS4 family. As to quaternary structure, part of the 30S ribosomal subunit. Contacts protein S5. The interaction surface between S4 and S5 is involved in control of translational fidelity.

Functionally, one of the primary rRNA binding proteins, it binds directly to 16S rRNA where it nucleates assembly of the body of the 30S subunit. In terms of biological role, with S5 and S12 plays an important role in translational accuracy. The protein is Small ribosomal subunit protein uS4 of Acaryochloris marina (strain MBIC 11017).